Here is a 428-residue protein sequence, read N- to C-terminus: MDHQSLSRRTTKTVMIGHVPVGSSAPVVVQSMTNTDTADAAATVRQVYELWRAGSEIVRITVNSPEAAAQVGAIRRQLDDLGCNVPLVGDFHFNGHRLLAQYPDCAEALAKYRINPGNVGKGSKRDEQFSAMIKAAIDYNKPVRIGVNWGSLDQAKMARMMDENSKRAAPLAADALMREMLIQSALENAAAAEELGLPSDRIIISCKVSAVQDLIKVYRDLGSRCDYPLHLGLTEAGMGSKGIVASTAALSVLLQDGIGDTIRVSLTPEPGESRTKEVVVAQEILQTMGIRSFTPLVTACPGCGRTTSTFFQELAQKIQHYLRDQMPVWRSQYPGVENMSVAVMGCVVNGPGESKLANIGISLPGTGEVPVAPVYVDGEKTVTLKGERIADDFKVIVEEYVRVNYAEGGRLRQQGTGTGLKTIPLKAI.

[4Fe-4S] cluster-binding residues include Cys300, Cys303, Cys346, and Glu353.

This sequence belongs to the IspG family. Requires [4Fe-4S] cluster as cofactor.

The enzyme catalyses (2E)-4-hydroxy-3-methylbut-2-enyl diphosphate + oxidized [flavodoxin] + H2O + 2 H(+) = 2-C-methyl-D-erythritol 2,4-cyclic diphosphate + reduced [flavodoxin]. The protein operates within isoprenoid biosynthesis; isopentenyl diphosphate biosynthesis via DXP pathway; isopentenyl diphosphate from 1-deoxy-D-xylulose 5-phosphate: step 5/6. Its function is as follows. Converts 2C-methyl-D-erythritol 2,4-cyclodiphosphate (ME-2,4cPP) into 1-hydroxy-2-methyl-2-(E)-butenyl 4-diphosphate. This chain is 4-hydroxy-3-methylbut-2-en-1-yl diphosphate synthase (flavodoxin), found in Methylobacillus flagellatus (strain ATCC 51484 / DSM 6875 / VKM B-1610 / KT).